Reading from the N-terminus, the 101-residue chain is Ubiquitin-related modifier 1 homolog (101 aa).

Gly101 carries the post-translational modification 1-thioglycine. Residue Gly101 forms a Glycyl lysine isopeptide (Gly-Lys) (interchain with K-? in acceptor proteins) linkage.

This sequence belongs to the URM1 family. Interacts with cer. Post-translationally, C-terminal thiocarboxylation occurs in 2 steps, it is first acyl-adenylated (-COAMP) via the hesA/moeB/thiF part of the MOCS3 homolog, then thiocarboxylated (-COSH) via the rhodanese domain of the MOCS3 homolog.

The protein localises to the cytoplasm. It functions in the pathway tRNA modification; 5-methoxycarbonylmethyl-2-thiouridine-tRNA biosynthesis. Its function is as follows. Acts as a sulfur carrier required for 2-thiolation of mcm(5)S(2)U at tRNA wobble positions of cytosolic tRNA(Lys), tRNA(Glu) and tRNA(Gln). Serves as sulfur donor in tRNA 2-thiolation reaction by being thiocarboxylated (-COSH) at its C-terminus by MOCS3. The sulfur is then transferred to tRNA to form 2-thiolation of mcm(5)S(2)U. Also acts as a ubiquitin-like protein (UBL) that is covalently conjugated via an isopeptide bond to lysine residues of target proteins such as Prx2/Jafrac1, Ciao1, Eip71CD and GILT1. The thiocarboxylated form serves as substrate for conjugation and oxidative stress specifically induces the formation of UBL-protein conjugates. This Drosophila simulans (Fruit fly) protein is Ubiquitin-related modifier 1 homolog.